Reading from the N-terminus, the 123-residue chain is MSWFKQLWQNSREKGQYYELQAQKYLVSQGLTAIERNYYCPFGELDVIMKDGNTLVFVEVKFRKNHARGGANYALSIQKQARLKRSIYHYLAAKNLTNQPLRIDYVAITGEPSMHINWLKNVF.

It belongs to the UPF0102 family.

This Pseudoalteromonas translucida (strain TAC 125) protein is UPF0102 protein PSHAa2523.